A 216-amino-acid polypeptide reads, in one-letter code: Cytidylate kinase (216 aa).

ATP is bound at residue 7-15 (GPSGTGKST).

It belongs to the cytidylate kinase family. Type 1 subfamily.

The protein resides in the cytoplasm. It catalyses the reaction CMP + ATP = CDP + ADP. It carries out the reaction dCMP + ATP = dCDP + ADP. This Chlamydia trachomatis serovar D (strain ATCC VR-885 / DSM 19411 / UW-3/Cx) protein is Cytidylate kinase.